A 433-amino-acid polypeptide reads, in one-letter code: Bifunctional protein GlmU (433 aa).

The segment at 1-226 is pyrophosphorylase; it reads MLSVIILAAG…EECFLGVNSQ (226 aa). UDP-N-acetyl-alpha-D-glucosamine contacts are provided by residues 7–10, Lys21, and 80–81; these read LAAG and GT. Asp106 is a Mg(2+) binding site. The UDP-N-acetyl-alpha-D-glucosamine site is built by Gly138, Glu152, Asn167, and Asn224. Asn224 contributes to the Mg(2+) binding site. The segment at 227–247 is linker; sequence TERAKAEEIMLERLRKNAMDL. Positions 248–433 are N-acetyltransferase; the sequence is GVVMQLPSSI…NGYFKFFKKP (186 aa). UDP-N-acetyl-alpha-D-glucosamine-binding residues include Arg311 and Lys328. Catalysis depends on His339, which acts as the Proton acceptor. The UDP-N-acetyl-alpha-D-glucosamine site is built by Tyr342 and Asn353. Acetyl-CoA contacts are provided by residues Ala356, 362–363, Ser381, Ser399, and Arg416; that span reads NY.

It in the N-terminal section; belongs to the N-acetylglucosamine-1-phosphate uridyltransferase family. This sequence in the C-terminal section; belongs to the transferase hexapeptide repeat family. In terms of assembly, homotrimer. Mg(2+) serves as cofactor.

Its subcellular location is the cytoplasm. It catalyses the reaction alpha-D-glucosamine 1-phosphate + acetyl-CoA = N-acetyl-alpha-D-glucosamine 1-phosphate + CoA + H(+). It carries out the reaction N-acetyl-alpha-D-glucosamine 1-phosphate + UTP + H(+) = UDP-N-acetyl-alpha-D-glucosamine + diphosphate. Its pathway is nucleotide-sugar biosynthesis; UDP-N-acetyl-alpha-D-glucosamine biosynthesis; N-acetyl-alpha-D-glucosamine 1-phosphate from alpha-D-glucosamine 6-phosphate (route II): step 2/2. It functions in the pathway nucleotide-sugar biosynthesis; UDP-N-acetyl-alpha-D-glucosamine biosynthesis; UDP-N-acetyl-alpha-D-glucosamine from N-acetyl-alpha-D-glucosamine 1-phosphate: step 1/1. It participates in bacterial outer membrane biogenesis; LPS lipid A biosynthesis. In terms of biological role, catalyzes the last two sequential reactions in the de novo biosynthetic pathway for UDP-N-acetylglucosamine (UDP-GlcNAc). The C-terminal domain catalyzes the transfer of acetyl group from acetyl coenzyme A to glucosamine-1-phosphate (GlcN-1-P) to produce N-acetylglucosamine-1-phosphate (GlcNAc-1-P), which is converted into UDP-GlcNAc by the transfer of uridine 5-monophosphate (from uridine 5-triphosphate), a reaction catalyzed by the N-terminal domain. This Helicobacter pylori (strain HPAG1) protein is Bifunctional protein GlmU.